The sequence spans 189 residues: UPF0149 protein VSAL_I2539 (189 aa).

This sequence belongs to the UPF0149 family.

The chain is UPF0149 protein VSAL_I2539 from Aliivibrio salmonicida (strain LFI1238) (Vibrio salmonicida (strain LFI1238)).